The primary structure comprises 237 residues: Proteasome subunit alpha type-5-B (237 aa).

At M1 the chain carries N-acetylmethionine. Glycyl lysine isopeptide (Lys-Gly) (interchain with G-Cter in ubiquitin) cross-links involve residues K43, K66, and K185.

It belongs to the peptidase T1A family. In terms of assembly, component of the 20S core complex of the 26S proteasome. The 26S proteasome is composed of a core protease (CP), known as the 20S proteasome, capped at one or both ends by the 19S regulatory particle (RP/PA700). The 20S proteasome core is composed of 28 subunits that are arranged in four stacked rings, resulting in a barrel-shaped structure. The two end rings are each formed by seven alpha subunits, and the two central rings are each formed by seven beta subunits. The catalytic chamber with the active sites is on the inside of the barrel.

It is found in the cytoplasm. The protein localises to the nucleus. In terms of biological role, the proteasome is a multicatalytic proteinase complex which is characterized by its ability to cleave peptides with Arg, Phe, Tyr, Leu, and Glu adjacent to the leaving group at neutral or slightly basic pH. The proteasome has an ATP-dependent proteolytic activity. The chain is Proteasome subunit alpha type-5-B (PAE2) from Arabidopsis thaliana (Mouse-ear cress).